Here is a 185-residue protein sequence, read N- to C-terminus: Elongation factor P (185 aa).

Belongs to the elongation factor P family.

It localises to the cytoplasm. Its pathway is protein biosynthesis; polypeptide chain elongation. Its function is as follows. Involved in peptide bond synthesis. Stimulates efficient translation and peptide-bond synthesis on native or reconstituted 70S ribosomes in vitro. Probably functions indirectly by altering the affinity of the ribosome for aminoacyl-tRNA, thus increasing their reactivity as acceptors for peptidyl transferase. The chain is Elongation factor P from Nostoc punctiforme (strain ATCC 29133 / PCC 73102).